Here is a 377-residue protein sequence, read N- to C-terminus: Carbamoyl phosphate synthase small chain (377 aa).

A CPSase region spans residues 1–186; that stretch reads MSTPALLVLA…LGKGFVTPDE (186 aa). 3 residues coordinate L-glutamine: S47, G238, and G240. The 188-residue stretch at 190–377 folds into the Glutamine amidotransferase type-1 domain; the sequence is HVVAYDFGVK…IGNMKAAKRA (188 aa). C266 acts as the Nucleophile in catalysis. Residues L267, Q270, N308, G310, and F311 each coordinate L-glutamine. Catalysis depends on residues H350 and E352.

It belongs to the CarA family. Composed of two chains; the small (or glutamine) chain promotes the hydrolysis of glutamine to ammonia, which is used by the large (or ammonia) chain to synthesize carbamoyl phosphate. Tetramer of heterodimers (alpha,beta)4.

The enzyme catalyses hydrogencarbonate + L-glutamine + 2 ATP + H2O = carbamoyl phosphate + L-glutamate + 2 ADP + phosphate + 2 H(+). It catalyses the reaction L-glutamine + H2O = L-glutamate + NH4(+). It functions in the pathway amino-acid biosynthesis; L-arginine biosynthesis; carbamoyl phosphate from bicarbonate: step 1/1. It participates in pyrimidine metabolism; UMP biosynthesis via de novo pathway; (S)-dihydroorotate from bicarbonate: step 1/3. Functionally, small subunit of the glutamine-dependent carbamoyl phosphate synthetase (CPSase). CPSase catalyzes the formation of carbamoyl phosphate from the ammonia moiety of glutamine, carbonate, and phosphate donated by ATP, constituting the first step of 2 biosynthetic pathways, one leading to arginine and/or urea and the other to pyrimidine nucleotides. The small subunit (glutamine amidotransferase) binds and cleaves glutamine to supply the large subunit with the substrate ammonia. The protein is Carbamoyl phosphate synthase small chain of Neisseria meningitidis serogroup A / serotype 4A (strain DSM 15465 / Z2491).